The primary structure comprises 304 residues: Methionyl-tRNA formyltransferase (304 aa).

Ser109–Pro112 serves as a coordination point for (6S)-5,6,7,8-tetrahydrofolate.

The protein belongs to the Fmt family.

The enzyme catalyses L-methionyl-tRNA(fMet) + (6R)-10-formyltetrahydrofolate = N-formyl-L-methionyl-tRNA(fMet) + (6S)-5,6,7,8-tetrahydrofolate + H(+). Attaches a formyl group to the free amino group of methionyl-tRNA(fMet). The formyl group appears to play a dual role in the initiator identity of N-formylmethionyl-tRNA by promoting its recognition by IF2 and preventing the misappropriation of this tRNA by the elongation apparatus. The polypeptide is Methionyl-tRNA formyltransferase (Rickettsia bellii (strain RML369-C)).